We begin with the raw amino-acid sequence, 511 residues long: Sterol 14-alpha demethylase resB (511 aa).

A helical transmembrane segment spans residues 3 to 23 (ILWIVAYALLAFAASIALNLV). A heme-binding site is contributed by Cys451.

This sequence belongs to the cytochrome P450 family. The cofactor is heme.

Its subcellular location is the membrane. The enzyme catalyses a 14alpha-methyl steroid + 3 reduced [NADPH--hemoprotein reductase] + 3 O2 = a Delta(14) steroid + formate + 3 oxidized [NADPH--hemoprotein reductase] + 4 H2O + 4 H(+). It catalyses the reaction a 14alpha-methyl steroid + reduced [NADPH--hemoprotein reductase] + O2 = a 14alpha-hydroxymethyl steroid + oxidized [NADPH--hemoprotein reductase] + H2O + H(+). The catalysed reaction is a 14alpha-hydroxymethyl steroid + reduced [NADPH--hemoprotein reductase] + O2 = a 14alpha-formyl steroid + oxidized [NADPH--hemoprotein reductase] + 2 H2O + H(+). It carries out the reaction a 14alpha-formyl steroid + reduced [NADPH--hemoprotein reductase] + O2 = a Delta(14) steroid + formate + oxidized [NADPH--hemoprotein reductase] + H2O + 2 H(+). The enzyme catalyses lanosterol + 3 reduced [NADPH--hemoprotein reductase] + 3 O2 = 4,4-dimethyl-5alpha-cholesta-8,14,24-trien-3beta-ol + formate + 3 oxidized [NADPH--hemoprotein reductase] + 4 H2O + 4 H(+). It catalyses the reaction lanosterol + reduced [NADPH--hemoprotein reductase] + O2 = 32-hydroxylanosterol + oxidized [NADPH--hemoprotein reductase] + H2O + H(+). The catalysed reaction is 32-hydroxylanosterol + reduced [NADPH--hemoprotein reductase] + O2 = 32-oxolanosterol + oxidized [NADPH--hemoprotein reductase] + 2 H2O + H(+). It carries out the reaction 32-oxolanosterol + reduced [NADPH--hemoprotein reductase] + O2 = 4,4-dimethyl-5alpha-cholesta-8,14,24-trien-3beta-ol + formate + oxidized [NADPH--hemoprotein reductase] + H2O + 2 H(+). The enzyme catalyses eburicol + 3 reduced [NADPH--hemoprotein reductase] + 3 O2 = 14-demethyleburicol + formate + 3 oxidized [NADPH--hemoprotein reductase] + 4 H2O + 4 H(+). It catalyses the reaction eburicol + reduced [NADPH--hemoprotein reductase] + O2 = 32-hydroxyeburicol + oxidized [NADPH--hemoprotein reductase] + H2O + H(+). The catalysed reaction is 32-hydroxyeburicol + reduced [NADPH--hemoprotein reductase] + O2 = 32-oxoeburicol + oxidized [NADPH--hemoprotein reductase] + 2 H2O + H(+). It carries out the reaction 32-oxoeburicol + reduced [NADPH--hemoprotein reductase] + O2 = 14-demethyleburicol + formate + oxidized [NADPH--hemoprotein reductase] + H2O + 2 H(+). Its function is as follows. Sterol 14-alpha demethylase; part of the gene cluster that mediates the biosynthesis of the tetrahydropyranyl antifungal agent restricticin that acts as an inhibitor of CYP51 and blocks the ergosterol biosynthesis. Sterol 14-alpha-demethylase plays a critical role in the biosynthesis of ergosterol, the major sterol component in fungal membranes that participates in a variety of functions. ResB acts as a self-resistant CYP51 that contains mutations found in CYP51s isolated from azole resistance strains and that is not inhibited by the final product of the cluster, restricticin. The sequence is that of Sterol 14-alpha demethylase resB from Aspergillus sclerotiorum.